Reading from the N-terminus, the 501-residue chain is DEAD-box ATP-dependent RNA helicase 20 (501 aa).

Composition is skewed to basic and acidic residues over residues 1-20 (MSRY…RRSD) and 38-53 (SKKD…KLDL). The disordered stretch occupies residues 1-53 (MSRYDSRTGDSTSYRDRRSDSGFGGTSSYGSSGSHTSSKKDNDGNESPRKLDL). The Q motif signature appears at 99–127 (KSFRDVGFPDYVLEEVKKAGFTEPTPIQS). A Helicase ATP-binding domain is found at 130–305 (WPMAMKGRDL…KKFLYNPYKV (176 aa)). Position 143–150 (143–150 (AETGSGKT)) interacts with ATP. Positions 253 to 256 (DEAD) match the DEAD box motif. The Helicase C-terminal domain maps to 333–478 (KLVKLLEDIM…KVSPELASMG (146 aa)). A disordered region spans residues 473–501 (ELASMGRSTAPPPPGLGGFRDRGSRRGWS). Residues 491–501 (FRDRGSRRGWS) show a composition bias toward basic and acidic residues.

Belongs to the DEAD box helicase family. DDX5/DBP2 subfamily.

The protein resides in the nucleus. It carries out the reaction ATP + H2O = ADP + phosphate + H(+). In terms of biological role, ATP-dependent RNA helicase involved nonsense-mediated mRNA decay and ribosome biogenesis through rRNA processing. The sequence is that of DEAD-box ATP-dependent RNA helicase 20 (RH20) from Arabidopsis thaliana (Mouse-ear cress).